We begin with the raw amino-acid sequence, 210 residues long: Interleukin-6 (210 aa).

The signal sequence occupies residues 1 to 25; the sequence is MNSLSTSAFSPVAFSLGLLLVMATA. Cys72 and Cys78 are joined by a disulfide. The residue at position 81 (Ser81) is a Phosphoserine. An intrachain disulfide couples Cys101 to Cys111.

Belongs to the IL-6 superfamily. In terms of assembly, component of a hexamer of two molecules each of IL6, IL6R and IL6ST; first binds to IL6R to associate with the signaling subunit IL6ST. Interacts with IL6R (via the N-terminal ectodomain); this interaction may be affected by IL6R-binding with SORL1, hence decreasing IL6 cis signaling. Interacts with SORL1 (via the N-terminal ectodomain); this interaction leads to IL6 internalization and lysosomal degradation. May form a trimeric complex with the soluble SORL1 ectodomain and soluble IL6R receptor; this interaction might stabilize circulating IL6, hence promoting IL6 trans signaling.

Its subcellular location is the secreted. Its function is as follows. Cytokine with a wide variety of biological functions in immunity, tissue regeneration, and metabolism. Binds to IL6R, then the complex associates to the signaling subunit IL6ST/gp130 to trigger the intracellular IL6-signaling pathway. The interaction with the membrane-bound IL6R and IL6ST stimulates 'classic signaling', whereas the binding of IL6 and soluble IL6R to IL6ST stimulates 'trans-signaling'. Alternatively, 'cluster signaling' occurs when membrane-bound IL6:IL6R complexes on transmitter cells activate IL6ST receptors on neighboring receiver cells. Functionally, IL6 is a potent inducer of the acute phase response. Rapid production of IL6 contributes to host defense during infection and tissue injury, but excessive IL6 synthesis is involved in disease pathology. In the innate immune response, is synthesized by myeloid cells, such as macrophages and dendritic cells, upon recognition of pathogens through toll-like receptors (TLRs) at the site of infection or tissue injury. In the adaptive immune response, is required for the differentiation of B cells into immunoglobulin-secreting cells. Plays a major role in the differentiation of CD4(+) T cell subsets. Essential factor for the development of T follicular helper (Tfh) cells that are required for the induction of germinal-center formation. Required to drive naive CD4(+) T cells to the Th17 lineage. Also required for proliferation of myeloma cells and the survival of plasmablast cells. In terms of biological role, acts as an essential factor in bone homeostasis and on vessels directly or indirectly by induction of VEGF, resulting in increased angiogenesis activity and vascular permeability. Induces, through 'trans-signaling' and synergistically with IL1B and TNF, the production of VEGF. Involved in metabolic controls, is discharged into the bloodstream after muscle contraction increasing lipolysis and improving insulin resistance. 'Trans-signaling' in central nervous system also regulates energy and glucose homeostasis. Mediates, through GLP-1, crosstalk between insulin-sensitive tissues, intestinal L cells and pancreatic islets to adapt to changes in insulin demand. Also acts as a myokine. Plays a protective role during liver injury, being required for maintenance of tissue regeneration. Also has a pivotal role in iron metabolism by regulating HAMP/hepcidin expression upon inflammation or bacterial infection. Through activation of IL6ST-YAP-NOTCH pathway, induces inflammation-induced epithelial regeneration. The sequence is that of Interleukin-6 (IL6) from Mustela putorius furo (European domestic ferret).